Here is a 210-residue protein sequence, read N- to C-terminus: Transcriptional regulator MxiE (210 aa).

An HTH araC/xylS-type domain is found at 99–199 (YHLVLYLLRT…GFSARELSNI (101 aa)). 2 consecutive DNA-binding regions (H-T-H motif) follow at residues 118–139 (KSLTEHYGVSEAYFRSLCRKAL) and 166–189 (ITSAAMNNGYASTSHFSNEIKTRL).

Necessary for the secretion of ipa invasins. Probable transcriptional regulatory protein. This chain is Transcriptional regulator MxiE (mxiE), found in Shigella flexneri.